A 197-amino-acid polypeptide reads, in one-letter code: Putative peptidyl-prolyl cis-trans isomerase (197 aa).

The PPIase cyclophilin-type domain maps to 14–195; it reads GEIKVVMHTN…HDVVIESIDV (182 aa).

Belongs to the cyclophilin-type PPIase family.

It catalyses the reaction [protein]-peptidylproline (omega=180) = [protein]-peptidylproline (omega=0). Its function is as follows. PPIases accelerate the folding of proteins. It catalyzes the cis-trans isomerization of proline imidic peptide bonds in oligopeptides. The chain is Putative peptidyl-prolyl cis-trans isomerase from Staphylococcus aureus (strain bovine RF122 / ET3-1).